A 137-amino-acid chain; its full sequence is 6,7-dimethyl-8-ribityllumazine synthase (137 aa).

5-amino-6-(D-ribitylamino)uracil-binding positions include Phe-11, 43–45 (SFD), and 67–69 (CVI). Residue 72–73 (DT) participates in (2S)-2-hydroxy-3-oxobutyl phosphate binding. His-75 functions as the Proton donor in the catalytic mechanism. Leu-100 contributes to the 5-amino-6-(D-ribitylamino)uracil binding site. Arg-115 is a (2S)-2-hydroxy-3-oxobutyl phosphate binding site.

This sequence belongs to the DMRL synthase family. In terms of assembly, forms an icosahedral capsid composed of 60 subunits, arranged as a dodecamer of pentamers.

It carries out the reaction (2S)-2-hydroxy-3-oxobutyl phosphate + 5-amino-6-(D-ribitylamino)uracil = 6,7-dimethyl-8-(1-D-ribityl)lumazine + phosphate + 2 H2O + H(+). It functions in the pathway cofactor biosynthesis; riboflavin biosynthesis; riboflavin from 2-hydroxy-3-oxobutyl phosphate and 5-amino-6-(D-ribitylamino)uracil: step 1/2. Catalyzes the formation of 6,7-dimethyl-8-ribityllumazine by condensation of 5-amino-6-(D-ribitylamino)uracil with 3,4-dihydroxy-2-butanone 4-phosphate. This is the penultimate step in the biosynthesis of riboflavin. In Methanococcus maripaludis (strain DSM 14266 / JCM 13030 / NBRC 101832 / S2 / LL), this protein is 6,7-dimethyl-8-ribityllumazine synthase.